Reading from the N-terminus, the 164-residue chain is MKTIEEINQLNVKKILSEKKIPDFFPGDVIKVGVRITEGKKDRIQYFEGVCIARKNRDINSSFTVRKISFGEGVERTFPLYGTVIDTITVIRHGKVRRAKLYYLRDRTGKSARIAEKIRKKIGIEVDVKPEMVTEETLAPVAAEAEKQTEVQAEPKIEKSEEKK.

The interval 144-164 (EAEKQTEVQAEPKIEKSEEKK) is disordered.

This sequence belongs to the bacterial ribosomal protein bL19 family.

Functionally, this protein is located at the 30S-50S ribosomal subunit interface and may play a role in the structure and function of the aminoacyl-tRNA binding site. This is Large ribosomal subunit protein bL19 from Pelagibacter ubique (strain HTCC1062).